A 476-amino-acid polypeptide reads, in one-letter code: Glycogen synthase (476 aa).

K15 is a binding site for ADP-alpha-D-glucose.

Belongs to the glycosyltransferase 1 family. Bacterial/plant glycogen synthase subfamily.

It catalyses the reaction [(1-&gt;4)-alpha-D-glucosyl](n) + ADP-alpha-D-glucose = [(1-&gt;4)-alpha-D-glucosyl](n+1) + ADP + H(+). It participates in glycan biosynthesis; glycogen biosynthesis. Functionally, synthesizes alpha-1,4-glucan chains using ADP-glucose. This Halalkalibacterium halodurans (strain ATCC BAA-125 / DSM 18197 / FERM 7344 / JCM 9153 / C-125) (Bacillus halodurans) protein is Glycogen synthase.